The following is a 381-amino-acid chain: Dihydroorotate dehydrogenase (quinone) (381 aa).

Residues 77–81 and Ala101 each bind FMN; that span reads AGCDK. Lys81 contacts substrate. 126–129 provides a ligand contact to substrate; that stretch reads NRLG. Residues Asn158 and Asn191 each contribute to the FMN site. Substrate is bound at residue Asn191. Ser194 serves as the catalytic Nucleophile. Residue Asn196 participates in substrate binding. 2 residues coordinate FMN: Lys229 and Thr257. 258 to 259 lines the substrate pocket; sequence NT. FMN-binding positions include Gly287, Gly316, and 337-338; that span reads YT.

This sequence belongs to the dihydroorotate dehydrogenase family. Type 2 subfamily. In terms of assembly, monomer. Requires FMN as cofactor.

The protein localises to the cell membrane. It carries out the reaction (S)-dihydroorotate + a quinone = orotate + a quinol. Its pathway is pyrimidine metabolism; UMP biosynthesis via de novo pathway; orotate from (S)-dihydroorotate (quinone route): step 1/1. Its function is as follows. Catalyzes the conversion of dihydroorotate to orotate with quinone as electron acceptor. The sequence is that of Dihydroorotate dehydrogenase (quinone) (pyrD) from Synechocystis sp. (strain ATCC 27184 / PCC 6803 / Kazusa).